A 158-amino-acid polypeptide reads, in one-letter code: 6,7-dimethyl-8-ribityllumazine synthase (158 aa).

Residues phenylalanine 22, 57 to 59, and 81 to 83 contribute to the 5-amino-6-(D-ribitylamino)uracil site; these read AYE and AVI. 86 to 87 provides a ligand contact to (2S)-2-hydroxy-3-oxobutyl phosphate; that stretch reads GT. The active-site Proton donor is the histidine 89. Residue phenylalanine 114 participates in 5-amino-6-(D-ribitylamino)uracil binding. Arginine 128 contributes to the (2S)-2-hydroxy-3-oxobutyl phosphate binding site.

It belongs to the DMRL synthase family. As to quaternary structure, forms an icosahedral capsid composed of 60 subunits, arranged as a dodecamer of pentamers.

The enzyme catalyses (2S)-2-hydroxy-3-oxobutyl phosphate + 5-amino-6-(D-ribitylamino)uracil = 6,7-dimethyl-8-(1-D-ribityl)lumazine + phosphate + 2 H2O + H(+). The protein operates within cofactor biosynthesis; riboflavin biosynthesis; riboflavin from 2-hydroxy-3-oxobutyl phosphate and 5-amino-6-(D-ribitylamino)uracil: step 1/2. Functionally, catalyzes the formation of 6,7-dimethyl-8-ribityllumazine by condensation of 5-amino-6-(D-ribitylamino)uracil with 3,4-dihydroxy-2-butanone 4-phosphate. This is the penultimate step in the biosynthesis of riboflavin. The polypeptide is 6,7-dimethyl-8-ribityllumazine synthase (Pseudoalteromonas atlantica (strain T6c / ATCC BAA-1087)).